Consider the following 1705-residue polypeptide: Protein TIC 214 (1705 aa).

5 consecutive transmembrane segments (helical) span residues 18–38 (IINS…FSIG), 67–87 (FITG…HLAL), 127–147 (LSIQ…HFIL), 175–195 (VGWI…LVWI), and 218–238 (SMSM…HYLG).

Belongs to the TIC214 family. As to quaternary structure, part of the Tic complex.

It is found in the plastid. The protein resides in the chloroplast inner membrane. In terms of biological role, involved in protein precursor import into chloroplasts. May be part of an intermediate translocation complex acting as a protein-conducting channel at the inner envelope. This chain is Protein TIC 214, found in Helianthus annuus (Common sunflower).